Here is a 291-residue protein sequence, read N- to C-terminus: Ribosome biogenesis protein BRX1 (291 aa).

The Brix domain maps to 31-232 (QRTLLISSRG…VILILEGSFG (202 aa)). At Ser285 the chain carries Phosphoserine.

The protein belongs to the BRX1 family. As to quaternary structure, part of a complex that includes BRX1, RPF1, RPF2 and SSF1 or SSF2.

It localises to the nucleus. The protein resides in the nucleolus. Functionally, required for biogenesis of the 60S ribosomal subunit. The polypeptide is Ribosome biogenesis protein BRX1 (BRX1) (Saccharomyces cerevisiae (strain ATCC 204508 / S288c) (Baker's yeast)).